Reading from the N-terminus, the 289-residue chain is MIDFTTWWQHLPSQMNPVIFSIDGIAIRWYGTMYIVAFAIVYLLSKYRISNEKLPFDKTFPGDALTWAMGGVLIGGRIGYILFYGFDWFLQDPVGTLIPIKFGNGSCAFSGINGMSFHGGLIGVAIALWLFTRTHKVDFLKTVDLFIPALPLGYTFGRLGNFINGELYGRVTTSAIGMYFPAAPTVALRHPSQLYEAFFEGIVLFIILWTIRKKAPWPGYLSGLYLIGYGTVRFFIEFFREPDAQLGFVFLNFSMGQVLCFLMIAAGIGILVWSKQRAENADVMMGGKR.

3 helical membrane-spanning segments follow: residues 24 to 44 (GIAI…VYLL), 70 to 90 (GGVL…DWFL), and 111 to 131 (GING…LWLF). R158 serves as a coordination point for a 1,2-diacyl-sn-glycero-3-phospho-(1'-sn-glycerol). The next 2 membrane-spanning stretches (helical) occupy residues 219 to 239 (GYLS…IEFF) and 253 to 273 (FSMG…ILVW).

Belongs to the Lgt family.

The protein resides in the cell inner membrane. It catalyses the reaction L-cysteinyl-[prolipoprotein] + a 1,2-diacyl-sn-glycero-3-phospho-(1'-sn-glycerol) = an S-1,2-diacyl-sn-glyceryl-L-cysteinyl-[prolipoprotein] + sn-glycerol 1-phosphate + H(+). It participates in protein modification; lipoprotein biosynthesis (diacylglyceryl transfer). Its function is as follows. Catalyzes the transfer of the diacylglyceryl group from phosphatidylglycerol to the sulfhydryl group of the N-terminal cysteine of a prolipoprotein, the first step in the formation of mature lipoproteins. In Chlorobaculum tepidum (strain ATCC 49652 / DSM 12025 / NBRC 103806 / TLS) (Chlorobium tepidum), this protein is Phosphatidylglycerol--prolipoprotein diacylglyceryl transferase.